A 72-amino-acid polypeptide reads, in one-letter code: Large ribosomal subunit protein uL29 (72 aa).

It belongs to the universal ribosomal protein uL29 family.

The chain is Large ribosomal subunit protein uL29 from Chlamydia trachomatis serovar L2 (strain ATCC VR-902B / DSM 19102 / 434/Bu).